Here is a 101-residue protein sequence, read N- to C-terminus: Small ribosomal subunit protein uS14 (101 aa).

The protein belongs to the universal ribosomal protein uS14 family. In terms of assembly, part of the 30S ribosomal subunit. Contacts proteins S3 and S10.

In terms of biological role, binds 16S rRNA, required for the assembly of 30S particles and may also be responsible for determining the conformation of the 16S rRNA at the A site. The protein is Small ribosomal subunit protein uS14 of Pseudomonas aeruginosa (strain LESB58).